We begin with the raw amino-acid sequence, 164 residues long: DNA-binding protein inhibitor ID-1 (164 aa).

The bHLH domain occupies 46–98; it reads LPALLDEQQVNVLLYDMNGCYSRLKELVPTLPQNRKVSKVEILQHVIDYIRDL. The Nuclear export signal motif lies at 91-104; that stretch reads VIDYIRDLQLELNS.

As to quaternary structure, heterodimer with other HLH proteins. Interacts with COPS5, IFI204, GATA4, NKX2-5, CLOCK and BMAL1. Isoform Short can form homodimers. Phosphorylated in vitro by PKA and PKC.

The protein resides in the cytoplasm. The protein localises to the nucleus. In terms of biological role, transcriptional regulator (lacking a basic DNA binding domain) which negatively regulates the basic helix-loop-helix (bHLH) transcription factors by forming heterodimers and inhibiting their DNA binding and transcriptional activity. Implicated in regulating a variety of cellular processes, including cellular growth, senescence, differentiation, apoptosis, angiogenesis, and neoplastic transformation. Inhibits skeletal muscle and cardiac myocyte differentiation. Regulates the circadian clock by repressing the transcriptional activator activity of the CLOCK-BMAL1 heterodimer. In Rattus norvegicus (Rat), this protein is DNA-binding protein inhibitor ID-1 (Id1).